The sequence spans 419 residues: UDP-N-acetylglucosamine 1-carboxyvinyltransferase (419 aa).

22–23 (KN) contacts phosphoenolpyruvate. Arginine 91 contacts UDP-N-acetyl-alpha-D-glucosamine. Residue cysteine 115 is the Proton donor of the active site. Residue cysteine 115 is modified to 2-(S-cysteinyl)pyruvic acid O-phosphothioketal. UDP-N-acetyl-alpha-D-glucosamine-binding positions include 120–124 (RPVDL), 160–163 (KVSV), aspartate 305, and isoleucine 327.

The protein belongs to the EPSP synthase family. MurA subfamily.

The protein localises to the cytoplasm. The catalysed reaction is phosphoenolpyruvate + UDP-N-acetyl-alpha-D-glucosamine = UDP-N-acetyl-3-O-(1-carboxyvinyl)-alpha-D-glucosamine + phosphate. It functions in the pathway cell wall biogenesis; peptidoglycan biosynthesis. Functionally, cell wall formation. Adds enolpyruvyl to UDP-N-acetylglucosamine. This is UDP-N-acetylglucosamine 1-carboxyvinyltransferase from Klebsiella pneumoniae (strain 342).